Reading from the N-terminus, the 331-residue chain is Inactive serine/threonine-protein kinase BKN1 (331 aa).

Gly2 carries the N-myristoyl glycine lipid modification. Cys4 carries the S-palmitoyl cysteine lipid modification. In terms of domain architecture, Protein kinase spans 58–328 (DYSVRKFYKG…VLDGLNHIAE (271 aa)).

It belongs to the protein kinase superfamily. Ser/Thr protein kinase family. Restricted to stigma in flowers.

The protein resides in the cell membrane. It localises to the nucleus. Collaboratively with BKN2/SZE2, involved in compatible pollen-stigma interactions. This Arabidopsis thaliana (Mouse-ear cress) protein is Inactive serine/threonine-protein kinase BKN1.